The chain runs to 118 residues: uncharacterized protein (118 aa).

The protein belongs to the transposase IS3/IS150/IS904 family.

This is an uncharacterized protein from Haemophilus influenzae (strain ATCC 51907 / DSM 11121 / KW20 / Rd).